Consider the following 395-residue polypeptide: Putative nickel insertion protein (395 aa).

It belongs to the LarC family.

The polypeptide is Putative nickel insertion protein (Methanopyrus kandleri (strain AV19 / DSM 6324 / JCM 9639 / NBRC 100938)).